A 127-amino-acid polypeptide reads, in one-letter code: RxLR effector protein SFI3 (127 aa).

A signal peptide spans 1 to 20 (MRFLLVAVVAMMALVSSSTA). Residues 40 to 62 (RSLRNTEERSIAAILAEAGEEDR) carry the RxLR-dEER motif. Residues 72 to 107 (WYKAKLTPTQVKTVLGVSQAEMNNVAKQLQRLYLGY) are WY-domain.

This sequence belongs to the RxLR effector family. In terms of assembly, forms an unusual trans-homodimer. Interacts with host UBK.

It localises to the secreted. The protein localises to the host nucleus. Its subcellular location is the host nucleolus. Functionally, effector that suppresses flg22-induced post-translational MAP kinase activation in potato and tomato, but not in Arabidopsis. The perception of highly conserved pathogen- or microbe-associated molecular patterns (PAMPs/MAMPs), such as flg22, triggers converging signaling pathways recruiting MAP kinase cascades and inducing transcriptional re-programming, yielding a generic antimicrobial response. Does not suppress programmed cell death triggered by the P.infestans elicitin infestin-1 (INF1), or by co-expression of tomato Cf4 with Cladosporium fulvum Avr4. Suppresses early pattern-triggered immunity (PTI) via interaction with the U-box-kinase protein UBK, a positive regulator of specific PTI pathways in both potato and Nicotiana benthamiana. The protein is RxLR effector protein SFI3 of Phytophthora infestans (strain T30-4) (Potato late blight agent).